We begin with the raw amino-acid sequence, 149 residues long: Large ribosomal subunit protein uL15 (149 aa).

A disordered region spans residues 1–54 (MSLKLHNLKPTPNSRPEKHRKGRGHAAGKGKQAGKGQSGQNKRKGHRLGFEGGQ). Positions 17 to 28 (EKHRKGRGHAAG) are enriched in basic residues.

The protein belongs to the universal ribosomal protein uL15 family. Part of the 50S ribosomal subunit.

Binds to the 23S rRNA. This Mycoplasmopsis synoviae (strain 53) (Mycoplasma synoviae) protein is Large ribosomal subunit protein uL15.